The following is a 357-amino-acid chain: Norreticuline-7-O-methyltransferase (357 aa).

Aspartate 225 serves as a coordination point for S-adenosyl-L-methionine. The Proton acceptor role is filled by histidine 263.

The protein belongs to the class I-like SAM-binding methyltransferase superfamily. Cation-independent O-methyltransferase family. In terms of tissue distribution, expressed instems, leaves, roots and seedlings.

Functionally, involved in the biosynthesis of benzylisoquinoline alkaloids. Catalyzes specifically the methylation of norreticuline at position seven to produce norlaudanine. No activity with norcoclaurine, reticuline, norlaudanosoline, norisoorientaline, scoulerine, salutaridinol, oripavine, salsolinol, codeine or morphine. Involved in papaverine biosynthesis. In Papaver somniferum (Opium poppy), this protein is Norreticuline-7-O-methyltransferase.